The sequence spans 31 residues: Protamine-1B (31 aa).

The disordered stretch occupies residues 1–31 (MPRRRRASRRIRRRRRPRVSRRRRRGGRRRR).

As to expression, testis.

The protein resides in the nucleus. The protein localises to the chromosome. Its function is as follows. Protamines substitute for histones in the chromatin of sperm during the haploid phase of spermatogenesis. They compact sperm DNA into a highly condensed, stable and inactive complex. In Oncorhynchus mykiss (Rainbow trout), this protein is Protamine-1B.